The primary structure comprises 511 residues: Maturase K (511 aa).

Belongs to the intron maturase 2 family. MatK subfamily.

The protein localises to the plastid. Its subcellular location is the chloroplast. Functionally, usually encoded in the trnK tRNA gene intron. Probably assists in splicing its own and other chloroplast group II introns. The chain is Maturase K from Avena sativa (Oat).